The sequence spans 346 residues: Tryptophan--tRNA ligase (346 aa).

ATP is bound by residues 11–13 (RPT) and 19–20 (GH). The 'HIGH' region signature appears at 12–20 (PTGKLHLGH). Residue Asp-143 coordinates L-tryptophan. ATP is bound by residues 155-157 (GKD), Leu-193, and 201-205 (KMSKS). The short motif at 201–205 (KMSKS) is the 'KMSKS' region element.

The protein belongs to the class-I aminoacyl-tRNA synthetase family. As to quaternary structure, homodimer.

The protein resides in the cytoplasm. The catalysed reaction is tRNA(Trp) + L-tryptophan + ATP = L-tryptophyl-tRNA(Trp) + AMP + diphosphate + H(+). Functionally, catalyzes the attachment of tryptophan to tRNA(Trp). The sequence is that of Tryptophan--tRNA ligase from Chlamydia muridarum (strain MoPn / Nigg).